Consider the following 137-residue polypeptide: Large ribosomal subunit protein uL16 (137 aa).

The protein belongs to the universal ribosomal protein uL16 family. In terms of assembly, part of the 50S ribosomal subunit.

Binds 23S rRNA and is also seen to make contacts with the A and possibly P site tRNAs. The sequence is that of Large ribosomal subunit protein uL16 from Rhizobium johnstonii (strain DSM 114642 / LMG 32736 / 3841) (Rhizobium leguminosarum bv. viciae).